The chain runs to 826 residues: Prominin-1-A (826 aa).

The next 3 membrane-spanning stretches (helical) occupy residues Tyr-50–Val-70, Val-106–Phe-126, and Leu-153–Tyr-173. N-linked (GlcNAc...) asparagine glycans are attached at residues Asn-178, Asn-268, Asn-286, Asn-327, Asn-388, and Asn-404. 2 helical membrane-spanning segments follow: residues Cys-439–Phe-459 and Val-483–Ala-503. Asn-576, Asn-582, Asn-617, and Asn-693 each carry an N-linked (GlcNAc...) asparagine glycan.

The protein belongs to the prominin family.

The protein localises to the apical cell membrane. It is found in the cell projection. Its subcellular location is the microvillus membrane. The protein resides in the endoplasmic reticulum. It localises to the endoplasmic reticulum-Golgi intermediate compartment. Its function is as follows. May play a role in cell differentiation, proliferation and apoptosis. Binds cholesterol in cholesterol-containing plasma membrane microdomains and may play a role in the organization of the apical plasma membrane in epithelial cells. Involved in regulation of MAPK and Akt signaling pathways. This Danio rerio (Zebrafish) protein is Prominin-1-A (prom1a).